The chain runs to 86 residues: U13-theraphotoxin-Cg1b (86 aa).

The signal sequence occupies residues 1–21; that stretch reads MKVSVLITLAVLGVMFVWASA. Positions 22–51 are excised as a propeptide; it reads AELEQSGSDQKDSPAWLKSMERIFQSEERE. Intrachain disulfides connect Cys52–Cys66, Cys59–Cys71, and Cys65–Cys78.

The protein belongs to the neurotoxin 10 (Hwtx-1) family. 41 (Jztx-36) subfamily. Expressed by the venom gland.

The protein localises to the secreted. Its function is as follows. Probable ion channel inhibitor. This chain is U13-theraphotoxin-Cg1b, found in Chilobrachys guangxiensis (Chinese earth tiger tarantula).